Reading from the N-terminus, the 348-residue chain is 4-hydroxy-3-methylbut-2-en-1-yl diphosphate synthase (flavodoxin) (348 aa).

[4Fe-4S] cluster-binding residues include Cys-263, Cys-266, Cys-298, and Glu-305.

It belongs to the IspG family. [4Fe-4S] cluster is required as a cofactor.

It carries out the reaction (2E)-4-hydroxy-3-methylbut-2-enyl diphosphate + oxidized [flavodoxin] + H2O + 2 H(+) = 2-C-methyl-D-erythritol 2,4-cyclic diphosphate + reduced [flavodoxin]. The protein operates within isoprenoid biosynthesis; isopentenyl diphosphate biosynthesis via DXP pathway; isopentenyl diphosphate from 1-deoxy-D-xylulose 5-phosphate: step 5/6. Its function is as follows. Converts 2C-methyl-D-erythritol 2,4-cyclodiphosphate (ME-2,4cPP) into 1-hydroxy-2-methyl-2-(E)-butenyl 4-diphosphate. This Dehalococcoides mccartyi (strain ATCC BAA-2100 / JCM 16839 / KCTC 5957 / BAV1) protein is 4-hydroxy-3-methylbut-2-en-1-yl diphosphate synthase (flavodoxin).